Consider the following 323-residue polypeptide: Putative ABC transporter substrate-binding lipoprotein YhfQ (323 aa).

A signal peptide spans Met-1 to Ala-19. Cys-20 carries the N-palmitoyl cysteine lipid modification. Cys-20 is lipidated: S-diacylglycerol cysteine. Residues Arg-51–Lys-322 form the Fe/B12 periplasmic-binding domain.

It belongs to the bacterial solute-binding protein 8 family. As to quaternary structure, interacts with FloT.

It localises to the cell membrane. The protein localises to the membrane raft. The polypeptide is Putative ABC transporter substrate-binding lipoprotein YhfQ (yhfQ) (Bacillus subtilis (strain 168)).